Here is a 126-residue protein sequence, read N- to C-terminus: Large ribosomal subunit protein bL19 (126 aa).

This sequence belongs to the bacterial ribosomal protein bL19 family.

This protein is located at the 30S-50S ribosomal subunit interface and may play a role in the structure and function of the aminoacyl-tRNA binding site. The polypeptide is Large ribosomal subunit protein bL19 (Bordetella petrii (strain ATCC BAA-461 / DSM 12804 / CCUG 43448)).